The sequence spans 375 residues: AVTNLSNVLKNGNDNFTARMFTEVVKNNPGKSIVLSAFSVLPPLAQLALASDGETHEELLKAIGFPDDDAIRTEFASKSRDLRSIKGVELKMANKVYVHDGGKLDENFAVVSRDVFNSDVQNIDFSKNTVAAKSINDWVEENTNNRIKDLVNPDSLSSATAAVLVNAIYFKGAWSSKFDERLTSDRDFYVSKDKTIKVPMMYKRGDYKYGESAVLNAQLIEIPYKGDQSSLIVVLPKDKDGITQLQEALKDPKTLETAQQSMYSTEVDLYLPKFKIETETNLKDVLSNMNVNKIFNNDAQITRLLKGESLSVSEAIQKAFIEINEEGAEAAAANAFAVVFMSAVVSQPLVFKANHPFVFFLKGDGVTLFNGVFHP.

Belongs to the serpin family. Hemolymph.

The protein localises to the secreted. In Bombyx mori (Silk moth), this protein is Antichymotrypsin-2.